The sequence spans 212 residues: Probable U3 small nucleolar RNA-associated protein 11 (212 aa).

The protein belongs to the UTP11 family. As to quaternary structure, component of the ribosomal small subunit (SSU) processome.

It localises to the nucleus. Its subcellular location is the nucleolus. In terms of biological role, involved in nucleolar processing of pre-18S ribosomal RNA. The sequence is that of Probable U3 small nucleolar RNA-associated protein 11 from Plasmodium falciparum (isolate 3D7).